A 205-amino-acid chain; its full sequence is SCO2-like protein RF_0960 (205 aa).

Cu cation is bound by residues Cys82, Cys86, and His172.

It belongs to the SCO1/2 family.

This Rickettsia felis (strain ATCC VR-1525 / URRWXCal2) (Rickettsia azadi) protein is SCO2-like protein RF_0960.